The chain runs to 870 residues: DNA-directed RNA polymerase subunit Rpo1N (870 aa).

Zn(2+) is bound by residues cysteine 60, cysteine 63, cysteine 70, histidine 73, cysteine 100, cysteine 103, cysteine 146, and cysteine 149. Residues aspartate 451, aspartate 453, and aspartate 455 each contribute to the Mg(2+) site.

The protein belongs to the RNA polymerase beta' chain family. In terms of assembly, part of the RNA polymerase complex. Requires Mg(2+) as cofactor. Zn(2+) serves as cofactor.

Its subcellular location is the cytoplasm. The enzyme catalyses RNA(n) + a ribonucleoside 5'-triphosphate = RNA(n+1) + diphosphate. Functionally, DNA-dependent RNA polymerase (RNAP) catalyzes the transcription of DNA into RNA using the four ribonucleoside triphosphates as substrates. Forms the clamp head domain. The protein is DNA-directed RNA polymerase subunit Rpo1N of Methanothermobacter thermautotrophicus (strain ATCC 29096 / DSM 1053 / JCM 10044 / NBRC 100330 / Delta H) (Methanobacterium thermoautotrophicum).